The primary structure comprises 159 residues: Neuroglobin (159 aa).

The Globin domain occupies 3 to 151; the sequence is KLSEKDKELI…VVAAMSQGWA (149 aa). The heme b site is built by H66 and H98.

It belongs to the globin family. As to quaternary structure, monomer. Homodimers and homotetramers. Mainly monomeric but also detected as part of homodimers and homotetramers.

The protein resides in the cytoplasm. It localises to the cytosol. Its subcellular location is the mitochondrion matrix. It catalyses the reaction Fe(III)-heme b-[protein] + nitric oxide + H2O = Fe(II)-heme b-[protein] + nitrite + 2 H(+). Its function is as follows. Monomeric globin with a bis-histidyl six-coordinate heme-iron atom through which it can bind dioxygen, carbon monoxide and nitric oxide. Could help transport oxygen and increase its availability to the metabolically active neuronal tissues, though its low quantity in tissues as well as its high affinity for dioxygen, which may limit its oxygen-releasing ability, argue against it. The ferrous/deoxygenated form exhibits a nitrite reductase activity and it could produce nitric oxide which in turn inhibits cellular respiration in response to hypoxia. In its ferrous/deoxygenated state, it may also exhibit GDI (Guanine nucleotide Dissociation Inhibitor) activity toward heterotrimeric G-alpha proteins, thereby regulating signal transduction to facilitate neuroprotective responses in the wake of hypoxia and associated oxidative stress. The sequence is that of Neuroglobin (ngb) from Dissostichus mawsoni (Antarctic cod).